We begin with the raw amino-acid sequence, 522 residues long: tRNA-2-methylthio-N(6)-dimethylallyladenosine synthase (522 aa).

The 117-residue stretch at 24–140 (RTYEVKTYGC…LPTLLQRAEH (117 aa)) folds into the MTTase N-terminal domain. [4Fe-4S] cluster-binding residues include Cys33, Cys69, Cys103, Cys177, Cys181, and Cys184. In terms of domain architecture, Radical SAM core spans 163 to 399 (RESAYAGWVS…MVVQEQVCEE (237 aa)). Residues 402 to 473 (QKLIGTTVEL…PFFLIADSGV (72 aa)) form the TRAM domain.

This sequence belongs to the methylthiotransferase family. MiaB subfamily. In terms of assembly, monomer. It depends on [4Fe-4S] cluster as a cofactor.

It localises to the cytoplasm. The enzyme catalyses N(6)-dimethylallyladenosine(37) in tRNA + (sulfur carrier)-SH + AH2 + 2 S-adenosyl-L-methionine = 2-methylsulfanyl-N(6)-dimethylallyladenosine(37) in tRNA + (sulfur carrier)-H + 5'-deoxyadenosine + L-methionine + A + S-adenosyl-L-homocysteine + 2 H(+). Catalyzes the methylthiolation of N6-(dimethylallyl)adenosine (i(6)A), leading to the formation of 2-methylthio-N6-(dimethylallyl)adenosine (ms(2)i(6)A) at position 37 in tRNAs that read codons beginning with uridine. The protein is tRNA-2-methylthio-N(6)-dimethylallyladenosine synthase of Corynebacterium glutamicum (strain ATCC 13032 / DSM 20300 / JCM 1318 / BCRC 11384 / CCUG 27702 / LMG 3730 / NBRC 12168 / NCIMB 10025 / NRRL B-2784 / 534).